We begin with the raw amino-acid sequence, 188 residues long: Ribosome-recycling factor (188 aa).

This sequence belongs to the RRF family.

It localises to the cytoplasm. Responsible for the release of ribosomes from messenger RNA at the termination of protein biosynthesis. May increase the efficiency of translation by recycling ribosomes from one round of translation to another. This is Ribosome-recycling factor from Dinoroseobacter shibae (strain DSM 16493 / NCIMB 14021 / DFL 12).